The chain runs to 417 residues: RH-like protein IC (417 aa).

A run of 11 helical transmembrane segments spans residues 12–32, 44–64, 77–97, 125–145, 172–192, 203–223, 238–258, 265–285, 287–307, 331–351, and 358–378; these read CLPL…YFFT, LVAS…GFGF, VAFN…LDGF, ISAG…MVLV, FYVF…KPLP, TIPS…WPSF, VFNT…VSSL, INMT…GTSC, LITS…ISIG, NFSL…VLHT, and MVGF…AIAV.

It belongs to the ammonium transporter (TC 2.A.49) family. Rh subfamily.

It localises to the membrane. May be part of an oligomeric complex which is likely to have a transport or channel function in the erythrocyte membrane. This Gorilla gorilla gorilla (Western lowland gorilla) protein is RH-like protein IC.